The primary structure comprises 1109 residues: Carbamoyl phosphate synthase large chain (1109 aa).

The tract at residues 1–402 is carboxyphosphate synthetic domain; sequence MPRRTDLTSV…ALQKAMRSID (402 aa). ATP-binding residues include Arg129, Arg169, Gly175, Gly176, Glu208, Ile210, Glu215, Gly241, Val242, His243, Gln285, and Glu299. The 196-residue stretch at 133 to 328 folds into the ATP-grasp 1 domain; it reads KGVVERCGAE…IAKIAARLAV (196 aa). 3 residues coordinate Mg(2+): Gln285, Glu299, and Asn301. Mn(2+) contacts are provided by Gln285, Glu299, and Asn301. Positions 403–548 are oligomerization domain; that stretch reads KAGSTFHWRG…YHYSSYDAET (146 aa). The carbamoyl phosphate synthetic domain stretch occupies residues 549–956; that stretch reads EVQPRDRPAV…AFAKSQAAAY (408 aa). The 199-residue stretch at 678-876 folds into the ATP-grasp 2 domain; sequence GEVLVAAGLP…LAKAASLLMA (199 aa). Arg714, Arg760, Leu762, Glu767, Gly792, Ile793, His794, Ser795, Gln835, and Glu847 together coordinate ATP. Mg(2+) is bound by residues Gln835, Glu847, and Asn849. Mn(2+) contacts are provided by Gln835, Glu847, and Asn849. The MGS-like domain occupies 957 to 1102; the sequence is GGLPTSGRVF…QEHDAARAAR (146 aa). The segment at 957-1109 is allosteric domain; it reads GGLPTSGRVF…AARETEGVHA (153 aa).

This sequence belongs to the CarB family. As to quaternary structure, composed of two chains; the small (or glutamine) chain promotes the hydrolysis of glutamine to ammonia, which is used by the large (or ammonia) chain to synthesize carbamoyl phosphate. Tetramer of heterodimers (alpha,beta)4. Mg(2+) serves as cofactor. Mn(2+) is required as a cofactor.

The enzyme catalyses hydrogencarbonate + L-glutamine + 2 ATP + H2O = carbamoyl phosphate + L-glutamate + 2 ADP + phosphate + 2 H(+). It catalyses the reaction hydrogencarbonate + NH4(+) + 2 ATP = carbamoyl phosphate + 2 ADP + phosphate + 2 H(+). Its pathway is amino-acid biosynthesis; L-arginine biosynthesis; carbamoyl phosphate from bicarbonate: step 1/1. It participates in pyrimidine metabolism; UMP biosynthesis via de novo pathway; (S)-dihydroorotate from bicarbonate: step 1/3. In terms of biological role, large subunit of the glutamine-dependent carbamoyl phosphate synthetase (CPSase). CPSase catalyzes the formation of carbamoyl phosphate from the ammonia moiety of glutamine, carbonate, and phosphate donated by ATP, constituting the first step of 2 biosynthetic pathways, one leading to arginine and/or urea and the other to pyrimidine nucleotides. The large subunit (synthetase) binds the substrates ammonia (free or transferred from glutamine from the small subunit), hydrogencarbonate and ATP and carries out an ATP-coupled ligase reaction, activating hydrogencarbonate by forming carboxy phosphate which reacts with ammonia to form carbamoyl phosphate. The polypeptide is Carbamoyl phosphate synthase large chain (Beutenbergia cavernae (strain ATCC BAA-8 / DSM 12333 / CCUG 43141 / JCM 11478 / NBRC 16432 / NCIMB 13614 / HKI 0122)).